The primary structure comprises 418 residues: Methionine aminopeptidase 2 (418 aa).

Residues 18-49 are disordered; it reads VSEPAAVDDSEVTEDATVQDKKKKKKKKKKKG. The span at 38–49 shows a compositional bias: basic residues; it reads KKKKKKKKKKKG. H172 is a binding site for substrate. 3 residues coordinate a divalent metal cation: D192, D203, and H272. Substrate is bound at residue H280. Positions 305 and 399 each coordinate a divalent metal cation.

It belongs to the peptidase M24A family. Methionine aminopeptidase eukaryotic type 2 subfamily. It depends on Co(2+) as a cofactor. Zn(2+) serves as cofactor. Mn(2+) is required as a cofactor. The cofactor is Fe(2+).

Its subcellular location is the cytoplasm. It carries out the reaction Release of N-terminal amino acids, preferentially methionine, from peptides and arylamides.. Cotranslationally removes the N-terminal methionine from nascent proteins. The N-terminal methionine is often cleaved when the second residue in the primary sequence is small and uncharged (Met-Ala-, Cys, Gly, Pro, Ser, Thr, or Val). This is Methionine aminopeptidase 2 from Kluyveromyces lactis (strain ATCC 8585 / CBS 2359 / DSM 70799 / NBRC 1267 / NRRL Y-1140 / WM37) (Yeast).